Reading from the N-terminus, the 482-residue chain is Serine decarboxylase 1 (482 aa).

The tract at residues 36 to 55 (EVESPPRPAEEEGEGSPTRR) is disordered. His-200 contributes to the substrate binding site. Lys-312 carries the post-translational modification N6-(pyridoxal phosphate)lysine.

The protein belongs to the group II decarboxylase family. Requires pyridoxal 5'-phosphate as cofactor.

The enzyme catalyses L-serine + H(+) = ethanolamine + CO2. Catalyzes the biosynthesis of ethanolamine from serine. Decarboxylation of free serine is the major source of ethanolamine production in plants and ethanolamine metabolism is crucial for the synthesis of choline, phosphatidylethanolamine (PE) and phosphatidylcholine (PC), and thus for plant growth. This Oryza sativa subsp. japonica (Rice) protein is Serine decarboxylase 1 (SDC1).